Here is an 83-residue protein sequence, read N- to C-terminus: Apolipoprotein C-I, acidic form (83 aa).

The signal sequence occupies residues 1–26 (MRLFLSLPVLVVVLSIVLEGPAPAQG).

This sequence belongs to the apolipoprotein C1 family.

The protein localises to the secreted. This is Apolipoprotein C-I, acidic form (APOC1A) from Pan paniscus (Pygmy chimpanzee).